A 424-amino-acid polypeptide reads, in one-letter code: 3-isopropylmalate dehydratase large subunit 2 (424 aa).

[4Fe-4S] cluster contacts are provided by cysteine 299, cysteine 359, and cysteine 362.

The protein belongs to the aconitase/IPM isomerase family. LeuC type 2 subfamily. Heterodimer of LeuC and LeuD. [4Fe-4S] cluster is required as a cofactor.

It catalyses the reaction (2R,3S)-3-isopropylmalate = (2S)-2-isopropylmalate. It functions in the pathway amino-acid biosynthesis; L-leucine biosynthesis; L-leucine from 3-methyl-2-oxobutanoate: step 2/4. Its function is as follows. Catalyzes the isomerization between 2-isopropylmalate and 3-isopropylmalate, via the formation of 2-isopropylmaleate. The protein is 3-isopropylmalate dehydratase large subunit 2 of Rubrobacter xylanophilus (strain DSM 9941 / JCM 11954 / NBRC 16129 / PRD-1).